A 439-amino-acid polypeptide reads, in one-letter code: MAYFNDIAPIKYEGTKTKNMFAFRHYNPEEVVAGKTMEEQLHFALAFWHTITMDGSDPFGGATMERPWDLEGGSELDRAHRRVDAFFEIAEKLGVKYYCFHDIDIAPTGNSLKEFYANLDEITDHLLEKQKATGIKLLWNTANMFSNPRYMNGVSTSNRAEVFAYGAAQVKKGLELSKKLGGENYVFWGGREGYESLLNTDRGLEMDHMAKFFHLAIDYAKSINHLPIFLIEPKPKEPMTHQYDFDAATALAFLQKYDLDKYFKLNLETNHAWLVGHTFEHELNTARTFNALGSIDANQGNYLLGWDTDEFPTLVIDITLAMHQILLNGGLGKGGINFDAKVRRTSFKAEDLILAHIAGMDTYARALKGAAAIIEDKFLSDIVDERYTSYKNTEVGQSIENGTATFESLAAFALEHGDDIELDSNHLEYIKSVLNDYLV.

Catalysis depends on residues histidine 101 and aspartate 104. The Mg(2+) site is built by glutamate 232, glutamate 268, histidine 271, aspartate 296, aspartate 307, aspartate 309, and aspartate 339.

Belongs to the xylose isomerase family. Homotetramer. Mg(2+) serves as cofactor.

The protein resides in the cytoplasm. It catalyses the reaction alpha-D-xylose = alpha-D-xylulofuranose. The sequence is that of Xylose isomerase (xylA) from Lactococcus lactis subsp. lactis (strain IL1403) (Streptococcus lactis).